Consider the following 259-residue polypeptide: Proteasome subunit alpha (259 aa).

The interval 222–259 (RITGPALEQLIPAEPAPASEPAPESKPDTETKPADPQD) is disordered. Residues 244 to 259 (PESKPDTETKPADPQD) show a composition bias toward basic and acidic residues.

The protein belongs to the peptidase T1A family. The 20S proteasome core is composed of 14 alpha and 14 beta subunits that assemble into four stacked heptameric rings, resulting in a barrel-shaped structure. The two inner rings, each composed of seven catalytic beta subunits, are sandwiched by two outer rings, each composed of seven alpha subunits. The catalytic chamber with the active sites is on the inside of the barrel. Has a gated structure, the ends of the cylinder being occluded by the N-termini of the alpha-subunits. Is capped by the proteasome-associated ATPase, ARC.

It is found in the cytoplasm. Its pathway is protein degradation; proteasomal Pup-dependent pathway. Its activity is regulated as follows. The formation of the proteasomal ATPase ARC-20S proteasome complex, likely via the docking of the C-termini of ARC into the intersubunit pockets in the alpha-rings, may trigger opening of the gate for substrate entry. Interconversion between the open-gate and close-gate conformations leads to a dynamic regulation of the 20S proteasome proteolysis activity. In terms of biological role, component of the proteasome core, a large protease complex with broad specificity involved in protein degradation. This Rhodococcus jostii (strain RHA1) protein is Proteasome subunit alpha.